The sequence spans 135 residues: Large ribosomal subunit protein uL16c (135 aa).

Belongs to the universal ribosomal protein uL16 family. As to quaternary structure, part of the 50S ribosomal subunit.

It is found in the plastid. The protein localises to the chloroplast. In Gossypium hirsutum (Upland cotton), this protein is Large ribosomal subunit protein uL16c.